A 141-amino-acid polypeptide reads, in one-letter code: Large ribosomal subunit protein uL11 (141 aa).

Belongs to the universal ribosomal protein uL11 family. Part of the ribosomal stalk of the 50S ribosomal subunit. Interacts with L10 and the large rRNA to form the base of the stalk. L10 forms an elongated spine to which L12 dimers bind in a sequential fashion forming a multimeric L10(L12)X complex. One or more lysine residues are methylated.

Forms part of the ribosomal stalk which helps the ribosome interact with GTP-bound translation factors. This is Large ribosomal subunit protein uL11 from Brevibacillus brevis (strain 47 / JCM 6285 / NBRC 100599).